Consider the following 860-residue polypeptide: Late endosome and vacuole interface protein 11 (860 aa).

A disordered region spans residues 19 to 45 (EIINNSDHSSSHSTSHEEEDEEEDDTE). Over residues 20-31 (IINNSDHSSSHS) the composition is skewed to low complexity. Acidic residues predominate over residues 35 to 45 (EEEDEEEDDTE). The segment at 84 to 138 (KNIAKFWSHFLAIEKKLTKVKCKHCGEILTRSDASLTKTFRSHLKTKHNISANKN) adopts a BED-type zinc-finger fold. Positions 105, 108, 126, and 131 each coordinate Zn(2+).

The protein belongs to the VID22 family.

The protein resides in the nucleus. In terms of biological role, involved in vacuolar processing and morphology. The polypeptide is Late endosome and vacuole interface protein 11 (ENV11) (Saccharomyces cerevisiae (strain ATCC 204508 / S288c) (Baker's yeast)).